We begin with the raw amino-acid sequence, 436 residues long: AMSH-like protease (436 aa).

M1 carries the N-acetylmethionine modification. Residues S25 and S242 each carry the phosphoserine modification. The 129-residue stretch at 269-397 folds into the MPN domain; the sequence is VVLSRDLCHK…IFRLTNAGML (129 aa). Zn(2+) is bound by residues H347, H349, D360, H362, C402, H408, and H410. Residues 347–360 carry the JAMM motif motif; the sequence is HTHPTQTAFLSSVD.

Belongs to the peptidase M67C family. Zn(2+) serves as cofactor. As to expression, ubiquitously expressed. Isoform 1 is widely expressed while isoform 2 is testis-specific.

In terms of biological role, zinc metalloprotease that specifically cleaves 'Lys-63'-linked polyubiquitin chains. Acts as a positive regulator of the TORC1 signaling pathway by mediating 'Lys-63'-linked deubiquitination of SESN2, thereby inhibiting SESN2-interaction with the GATOR2 complex. Does not cleave 'Lys-48'-linked polyubiquitin chains. In Mus musculus (Mouse), this protein is AMSH-like protease (Stambpl1).